A 325-amino-acid polypeptide reads, in one-letter code: Probable cell division protein WhiA (325 aa).

Residues 273–306 (SLEELGALADPPLTKDAVAGRIRRLLALADKRAN) constitute a DNA-binding region (H-T-H motif).

This sequence belongs to the WhiA family.

Functionally, involved in cell division and chromosome segregation. In Frankia casuarinae (strain DSM 45818 / CECT 9043 / HFP020203 / CcI3), this protein is Probable cell division protein WhiA.